A 373-amino-acid polypeptide reads, in one-letter code: Chemerin-like receptor 1 (373 aa).

The Extracellular segment spans residues 1 to 41 (MRMEDEDYNTSISYGDEYPDYLDSIVVLEDLSPLEARVTRI). The N-linked (GlcNAc...) asparagine glycan is linked to N9. A helical membrane pass occupies residues 42-64 (FLVVVYSIVCFLGILGNGLVIII). Residues 65–75 (ATFKMKKTVNM) are Cytoplasmic-facing. Residues 76–97 (VWFLNLAVADFLFNVFLPIHIT) traverse the membrane as a helical segment. At 98–114 (YAAMDYHWVFGTAMCKI) the chain is on the extracellular side. C112 and C189 are joined by a disulfide. Residues 115-135 (SNFLLIHNMFTSVFLLTIISS) form a helical membrane-spanning segment. Over 136–154 (DRCISVLLPVWSQNHRSVR) the chain is Cytoplasmic. A helical transmembrane segment spans residues 155–176 (LAYMACMVIWVLAFFLSSPSLV). The Extracellular portion of the chain corresponds to 177–224 (FRDTANLHGKISCFNNFSLSTPGSSSWPTHSQMDPVGYSRHMVVTVTR). N-linked (GlcNAc...) asparagine glycosylation is present at N192. Residues 225–245 (FLCGFLVPVLIITACYLTIVC) form a helical membrane-spanning segment. At 246 to 261 (KLQRNRLAKTKKPFKI) the chain is on the cytoplasmic side. The chain crosses the membrane as a helical span at residues 262–282 (IVTIIITFFLCWCPYHTLNLL). The Extracellular segment spans residues 283–300 (ELHHTAMPGSVFSLGLPL). The chain crosses the membrane as a helical span at residues 301 to 320 (ATALAIANSCMNPILYVFMG). Topologically, residues 321-373 (QDFKKFKVALFSRLVNALSEDTGHSSYPSHRSFTKMSSMNERTSMNERETGML) are cytoplasmic. Residue S339 is modified to Phosphoserine. Positions 341–373 (DTGHSSYPSHRSFTKMSSMNERTSMNERETGML) are disordered. T342 is subject to Phosphothreonine. The segment covering 344–363 (HSSYPSHRSFTKMSSMNERT) has biased composition (polar residues). Phosphoserine is present on residues S349, S352, and S358. Residues 364 to 373 (SMNERETGML) are compositionally biased toward basic and acidic residues.

Belongs to the chemokine-like receptor (CMKLR) family. As to expression, prominently expressed in developing osseous and cartilaginous tissue. Also found in adult parathyroid glands. Expressed in cardiovascular system, brain, kidney, gastrointestinal tissues and myeloid tissues. Expressed in a broad array of tissues associated with hematopoietic and immune function including, spleen, thymus, appendix, lymph node, bone marrow and fetal liver. Among leukocyte populations abundant expression in monocyte-derived macrophage and immature dendritic cells (DCs). High expression in blood monocytes and low levels in polymorphonuclear cells and T-cells. Expressed on endothelial cells. Highly expressed in differentiating adipocytes.

The protein localises to the cell membrane. Receptor for the chemoattractant adipokine chemerin/RARRES2 and for the omega-3 fatty acid derived molecule resolvin E1. Interaction with RARRES2 initiates activation of G proteins G(i)/G(o) and beta-arrestin pathways inducing cellular responses via second messenger pathways such as intracellular calcium mobilization, phosphorylation of MAP kinases MAPK1/MAPK3 (ERK1/2), TYRO3, MAPK14/P38MAPK and PI3K leading to multifunctional effects, like reduction of immune responses, enhancing of adipogenesis and angionesis. Resolvin E1 down-regulates cytokine production in macrophages by reducing the activation of MAPK1/3 (ERK1/2) and NF-kappa-B. Positively regulates adipogenesis and adipocyte metabolism. In terms of biological role, (Microbial infection) Acts as a coreceptor for several SIV strains (SIVMAC316, SIVMAC239, SIVMACL7E-FR and SIVSM62A), as well as a primary HIV-1 strain (92UG024-2). The chain is Chemerin-like receptor 1 from Homo sapiens (Human).